The primary structure comprises 92 residues: UPF0250 protein XAC0666 (92 aa).

Belongs to the UPF0250 family.

The chain is UPF0250 protein XAC0666 from Xanthomonas axonopodis pv. citri (strain 306).